Reading from the N-terminus, the 299-residue chain is Glycine--tRNA ligase alpha subunit (299 aa).

The protein belongs to the class-II aminoacyl-tRNA synthetase family. Tetramer of two alpha and two beta subunits.

It localises to the cytoplasm. It catalyses the reaction tRNA(Gly) + glycine + ATP = glycyl-tRNA(Gly) + AMP + diphosphate. The sequence is that of Glycine--tRNA ligase alpha subunit from Lactiplantibacillus plantarum (strain ATCC BAA-793 / NCIMB 8826 / WCFS1) (Lactobacillus plantarum).